The chain runs to 207 residues: Outer-membrane lipoprotein LolB (207 aa).

The signal sequence occupies residues 1–21; sequence MTLPDFRLIRLLPLASLVLTA. Cysteine 22 is lipidated: N-palmitoyl cysteine. A lipid anchor (S-diacylglycerol cysteine) is attached at cysteine 22.

The protein belongs to the LolB family. In terms of assembly, monomer.

The protein localises to the cell outer membrane. Its function is as follows. Plays a critical role in the incorporation of lipoproteins in the outer membrane after they are released by the LolA protein. The chain is Outer-membrane lipoprotein LolB from Citrobacter koseri (strain ATCC BAA-895 / CDC 4225-83 / SGSC4696).